We begin with the raw amino-acid sequence, 591 residues long: Paxillin (591 aa).

Residue Met-1 is modified to N-acetylmethionine. Residues 3-15 (DLDALLADLESTT) carry the LD motif 1 motif. The segment at 17 to 139 (HISKRPVFLS…SPTVMSSSLG (123 aa)) is disordered. Tyr-31 carries the post-translational modification Phosphotyrosine; by PTK6. A compositionally biased stretch (pro residues) spans 45–54 (VPPPVPPPPS). Ser-83 is modified (phosphoserine). Tyr-88 carries the phosphotyrosine modification. The span at 89–99 (SSSAKNSSASN) shows a compositional bias: low complexity. Phosphoserine is present on Ser-106. At Tyr-118 the chain carries Phosphotyrosine; by PTK6. Ser-119, Ser-126, and Ser-130 each carry phosphoserine. Residues 121-137 (PNKQKSAEPSPTVMSSS) are compositionally biased toward polar residues. Residue Thr-132 is modified to Phosphothreonine. A phosphoserine mark is found at Ser-137, Ser-140, and Ser-143. The LD motif 2 motif lies at 144-156 (ELDRLLLELNAVQ). A disordered region spans residues 156-261 (QHSPPGFPAD…QQQTRISASS (106 aa)). The residue at position 181 (Tyr-181) is a Phosphotyrosine. Positions 216 to 228 (SVESLLDELESSV) match the LD motif 3 motif. At Ser-230 the chain carries Phosphoserine. Residues 236-261 (TVNQGEMSSPQRVTSSQQQTRISASS) are compositionally biased toward polar residues. Ser-244 carries the post-translational modification Phosphoserine; by CDK5. Ser-250, Ser-258, Ser-261, Ser-272, Ser-303, Ser-322, Ser-332, and Ser-340 each carry phosphoserine. The interval 262–315 (ATRELDELMASLSDFKMQGLEQRVDGERPWAAGWPPSSRQSSPEGQDEGGFMAQ) is required for binding to PARVA and ILK. The LD motif 4 signature appears at 265 to 276 (ELDELMASLSDF). Residues 289-338 (RPWAAGWPPSSRQSSPEGQDEGGFMAQGKTGSSSPPGGLSKPGSQLDSML) form a disordered region. Low complexity predominate over residues 315–334 (QGKTGSSSPPGGLSKPGSQL). An LD motif 5 motif is present at residues 333-345 (QLDSMLGSLQSDL). 4 LIM zinc-binding domains span residues 356–415 (GVCG…LFSP), 416–473 (RCYY…DMFA), 474–533 (PKCG…RRGS), and 534–591 (LCSG…KLFC). Residue Ser-533 is modified to Phosphoserine.

Belongs to the paxillin family. As to quaternary structure, interacts in vitro with VCL/vinculin as well as to the SH3 domain of SRC and, when tyrosine phosphorylated, to the SH2 domain of CRK. Interacts with GIT1. Interacts with NUDT16L1/SDOS. Interacts with PTK2/FAK1. Interacts with PTK2B/PYK2. Interacts with ASAP2. Interacts with unphosphorylated ITGA4. Interacts with RNF5. Interacts with PDCD10. Interacts with NEK3, the interaction is prolactin-dependent. Interacts with PTK6. Interacts with TGFB1I1. Interacts with SORBS1. Interacts with PARVB. Interacts (via LD motif 4) with PARVA/PARVIN. Interacts (via LD motif 4) with ILK. Interacts (via cytoplasmic domain) with CEACAM1; the interaction is phosphotyrosyl-dependent. Interacts with LIMA1; this complex stabilizes actin dynamics. Interacts with CD36 (via C-terminus). Interacts with TRIM15. Interacts with PAK4; PAK4 acts as a scaffold to suppport PAXI phosphorylation at Ser-272. Post-translationally, phosphorylated by MAPK1/ERK2. Phosphorylated on tyrosine residues during integrin-mediated cell adhesion, embryonic development, fibroblast transformation and following stimulation of cells by mitogens. Phosphorylation at Ser-244 by CDK5 reduces its interaction with PTK2/FAK1 in matrix-cell focal adhesions (MCFA) during oligodendrocytes (OLs) differentiation. Phosphorylation at Tyr-31 and Tyr-118 by PTK6 promote the activation of RAC1 via CRK/CrKII, thereby promoting migration and invasion. Phosphorylation at Ser-250 by SLK is required for PXN redistribution and cell motility. Phosphorylation at Ser-272 promotes focal adhesion disassembly during cell migration.

Its subcellular location is the cytoplasm. It localises to the cytoskeleton. The protein localises to the cell junction. It is found in the focal adhesion. The protein resides in the cell cortex. In terms of biological role, cytoskeletal protein involved in actin-membrane attachment at sites of cell adhesion to the extracellular matrix (focal adhesion). Recruits other proteins such as TRIM15 to focal adhesion. This chain is Paxillin, found in Mus musculus (Mouse).